The sequence spans 798 residues: Phenylalanine--tRNA ligase beta subunit (798 aa).

The 111-residue stretch at 38–148 folds into the tRNA-binding domain; that stretch reads IGNYEKVVVG…PEAPVGEKIE (111 aa). A B5 domain is found at 400-475; the sequence is FTPKVIAVSL…RYLGYNNFPD (76 aa). Mg(2+) contacts are provided by aspartate 453, aspartate 459, glutamate 462, and glutamate 463. Positions 703–796 constitute an FDX-ACB domain; the sequence is SPYPEVKRDI…LEAKTGAKLR (94 aa).

The protein belongs to the phenylalanyl-tRNA synthetase beta subunit family. Type 1 subfamily. Tetramer of two alpha and two beta subunits. It depends on Mg(2+) as a cofactor.

It localises to the cytoplasm. It catalyses the reaction tRNA(Phe) + L-phenylalanine + ATP = L-phenylalanyl-tRNA(Phe) + AMP + diphosphate + H(+). This chain is Phenylalanine--tRNA ligase beta subunit, found in Carboxydothermus hydrogenoformans (strain ATCC BAA-161 / DSM 6008 / Z-2901).